The sequence spans 67 residues: MPQLDTSTWFITIISSMATLFILFQLKISSQTFPAPPSPKTMATEKTNNPWESKWTKTYLPLSLPPQ.

Residues 8-24 (TWFITIISSMATLFILF) form a helical membrane-spanning segment. Lysine 54 carries the post-translational modification N6-acetyllysine; alternate. Lysine 54 bears the N6-succinyllysine; alternate mark. At lysine 57 the chain carries N6-acetyllysine.

The protein belongs to the ATPase protein 8 family. As to quaternary structure, component of the ATP synthase complex composed at least of ATP5F1A/subunit alpha, ATP5F1B/subunit beta, ATP5MC1/subunit c (homooctomer), MT-ATP6/subunit a, MT-ATP8/subunit 8, ATP5ME/subunit e, ATP5MF/subunit f, ATP5MG/subunit g, ATP5MK/subunit k, ATP5MJ/subunit j, ATP5F1C/subunit gamma, ATP5F1D/subunit delta, ATP5F1E/subunit epsilon, ATP5PF/subunit F6, ATP5PB/subunit b, ATP5PD/subunit d, ATP5PO/subunit OSCP. ATP synthase complex consists of a soluble F(1) head domain (subunits alpha(3) and beta(3)) - the catalytic core - and a membrane F(0) domain - the membrane proton channel (subunits c, a, 8, e, f, g, k and j). These two domains are linked by a central stalk (subunits gamma, delta, and epsilon) rotating inside the F1 region and a stationary peripheral stalk (subunits F6, b, d, and OSCP). Interacts with PRICKLE3.

Its subcellular location is the mitochondrion membrane. In terms of biological role, subunit 8, of the mitochondrial membrane ATP synthase complex (F(1)F(0) ATP synthase or Complex V) that produces ATP from ADP in the presence of a proton gradient across the membrane which is generated by electron transport complexes of the respiratory chain. ATP synthase complex consist of a soluble F(1) head domain - the catalytic core - and a membrane F(1) domain - the membrane proton channel. These two domains are linked by a central stalk rotating inside the F(1) region and a stationary peripheral stalk. During catalysis, ATP synthesis in the catalytic domain of F(1) is coupled via a rotary mechanism of the central stalk subunits to proton translocation. In vivo, can only synthesize ATP although its ATP hydrolase activity can be activated artificially in vitro. Part of the complex F(0) domain. This is ATP synthase F(0) complex subunit 8 from Rattus norvegicus (Rat).